Here is a 264-residue protein sequence, read N- to C-terminus: Thymidylate synthase (264 aa).

Arg21 is a binding site for dUMP. His51 contacts (6R)-5,10-methylene-5,6,7,8-tetrahydrofolate. 126-127 is a dUMP binding site; the sequence is RR. Cys146 (nucleophile) is an active-site residue. DUMP contacts are provided by residues 166-169, Asn177, and 207-209; these read RSCD and HLY. (6R)-5,10-methylene-5,6,7,8-tetrahydrofolate is bound at residue Asp169. Ala263 serves as a coordination point for (6R)-5,10-methylene-5,6,7,8-tetrahydrofolate.

This sequence belongs to the thymidylate synthase family. Bacterial-type ThyA subfamily. As to quaternary structure, homodimer.

Its subcellular location is the cytoplasm. The catalysed reaction is dUMP + (6R)-5,10-methylene-5,6,7,8-tetrahydrofolate = 7,8-dihydrofolate + dTMP. Its pathway is pyrimidine metabolism; dTTP biosynthesis. Functionally, catalyzes the reductive methylation of 2'-deoxyuridine-5'-monophosphate (dUMP) to 2'-deoxythymidine-5'-monophosphate (dTMP) while utilizing 5,10-methylenetetrahydrofolate (mTHF) as the methyl donor and reductant in the reaction, yielding dihydrofolate (DHF) as a by-product. This enzymatic reaction provides an intracellular de novo source of dTMP, an essential precursor for DNA biosynthesis. The protein is Thymidylate synthase of Salmonella typhimurium (strain LT2 / SGSC1412 / ATCC 700720).